The primary structure comprises 508 residues: Maturase K (508 aa).

This sequence belongs to the intron maturase 2 family. MatK subfamily.

Its subcellular location is the plastid. The protein resides in the chloroplast. Functionally, usually encoded in the trnK tRNA gene intron. Probably assists in splicing its own and other chloroplast group II introns. The chain is Maturase K from Chaetosphaeridium globosum (Charophycean green alga).